Consider the following 556-residue polypeptide: Formate--tetrahydrofolate ligase (556 aa).

An ATP-binding site is contributed by 65-72 (TPAGEGKS).

Belongs to the formate--tetrahydrofolate ligase family.

It carries out the reaction (6S)-5,6,7,8-tetrahydrofolate + formate + ATP = (6R)-10-formyltetrahydrofolate + ADP + phosphate. Its pathway is one-carbon metabolism; tetrahydrofolate interconversion. The polypeptide is Formate--tetrahydrofolate ligase (Streptococcus agalactiae serotype III (strain NEM316)).